The following is a 372-amino-acid chain: Serine/threonine-protein kinase 17B (372 aa).

Residues 33–293 form the Protein kinase domain; sequence TLTPKELGRG…AESCLSHSWL (261 aa). Residues 39-47 and K62 each bind ATP; that span reads LGRGKFAVV. Residue D158 is the Proton acceptor of the active site. Positions 305–348 are disordered; sequence EETSGSSQIQDLTLRSSEEKTSKSSCNGSCGAREDKENIPEDGS. Residues 307-319 show a composition bias toward polar residues; it reads TSGSSQIQDLTLR.

It belongs to the protein kinase superfamily. CAMK Ser/Thr protein kinase family. DAP kinase subfamily. In terms of assembly, interacts with CHP1; the interaction induces CHP1 to translocate from the Golgi to the nucleus. Post-translationally, autophosphorylated.

The protein localises to the nucleus. It localises to the cell membrane. It is found in the endoplasmic reticulum-Golgi intermediate compartment. The catalysed reaction is L-seryl-[protein] + ATP = O-phospho-L-seryl-[protein] + ADP + H(+). It catalyses the reaction L-threonyl-[protein] + ATP = O-phospho-L-threonyl-[protein] + ADP + H(+). Acts as a positive regulator of apoptosis. Phosphorylates myosin light chains. This chain is Serine/threonine-protein kinase 17B (Stk17b), found in Mus musculus (Mouse).